We begin with the raw amino-acid sequence, 117 residues long: Large-conductance mechanosensitive channel (117 aa).

3 helical membrane-spanning segments follow: residues 7 to 27 (EFAL…GAAF), 30 to 50 (IVTA…FGTV), and 64 to 84 (GMFV…FIFV).

Belongs to the MscL family. As to quaternary structure, homopentamer.

It is found in the cell membrane. Functionally, channel that opens in response to stretch forces in the membrane lipid bilayer. May participate in the regulation of osmotic pressure changes within the cell. The chain is Large-conductance mechanosensitive channel from Staphylococcus saprophyticus subsp. saprophyticus (strain ATCC 15305 / DSM 20229 / NCIMB 8711 / NCTC 7292 / S-41).